The sequence spans 140 residues: MPTINQLVRNGRTDKVWKSKSPALNKGFNSLKKKSTDISAPQKRGVCTRVGTMTPKKPNSALRKYARVRLTNGIEVTAYIPGIGHNLQEHSVVLIRGGRVKDLPGVRYHIVRGALDTAGVDKRMQGRSKYGTKKPKAAKK.

Asp102 carries the 3-methylthioaspartic acid modification.

The protein belongs to the universal ribosomal protein uS12 family. Part of the 30S ribosomal subunit. Contacts proteins S8 and S17. May interact with IF1 in the 30S initiation complex.

With S4 and S5 plays an important role in translational accuracy. Its function is as follows. Interacts with and stabilizes bases of the 16S rRNA that are involved in tRNA selection in the A site and with the mRNA backbone. Located at the interface of the 30S and 50S subunits, it traverses the body of the 30S subunit contacting proteins on the other side and probably holding the rRNA structure together. The combined cluster of proteins S8, S12 and S17 appears to hold together the shoulder and platform of the 30S subunit. In Bacillus anthracis (strain A0248), this protein is Small ribosomal subunit protein uS12.